The sequence spans 453 residues: Allantoinase (453 aa).

The Zn(2+) site is built by His-59, His-61, Lys-146, His-186, His-242, and Asp-315. N6-carboxylysine is present on Lys-146.

The protein belongs to the metallo-dependent hydrolases superfamily. Allantoinase family. In terms of assembly, homotetramer. Zn(2+) serves as cofactor. Post-translationally, carboxylation allows a single lysine to coordinate two zinc ions.

It catalyses the reaction (S)-allantoin + H2O = allantoate + H(+). The protein operates within nitrogen metabolism; (S)-allantoin degradation; allantoate from (S)-allantoin: step 1/1. In terms of biological role, catalyzes the conversion of allantoin (5-ureidohydantoin) to allantoic acid by hydrolytic cleavage of the five-member hydantoin ring. The polypeptide is Allantoinase (Escherichia coli (strain K12 / MC4100 / BW2952)).